The primary structure comprises 189 residues: Cell division protein SepF (189 aa).

Residues 152–163 are compositionally biased toward polar residues; that stretch reads FQEEPSPSSVMN. The tract at residues 152 to 189 is disordered; the sequence is FQEEPSPSSVMNKDNEGPVSESVMAPEPAWGASVPSAI.

The protein belongs to the SepF family. In terms of assembly, homodimer. Interacts with FtsZ.

The protein resides in the cytoplasm. In terms of biological role, cell division protein that is part of the divisome complex and is recruited early to the Z-ring. Probably stimulates Z-ring formation, perhaps through the cross-linking of FtsZ protofilaments. Its function overlaps with FtsA. The chain is Cell division protein SepF from Prochlorococcus marinus (strain SARG / CCMP1375 / SS120).